A 559-amino-acid polypeptide reads, in one-letter code: DNA ligase (559 aa).

Glu247 provides a ligand contact to ATP. Residue Lys249 is the N6-AMP-lysine intermediate of the active site. Residues Arg254, Arg269, Glu299, Phe339, Arg414, and Lys420 each contribute to the ATP site.

Belongs to the ATP-dependent DNA ligase family. Requires Mg(2+) as cofactor.

It carries out the reaction ATP + (deoxyribonucleotide)n-3'-hydroxyl + 5'-phospho-(deoxyribonucleotide)m = (deoxyribonucleotide)n+m + AMP + diphosphate.. In terms of biological role, DNA ligase that seals nicks in double-stranded DNA during DNA replication, DNA recombination and DNA repair. The polypeptide is DNA ligase (Pyrococcus abyssi).